Here is a 207-residue protein sequence, read N- to C-terminus: Large ribosomal subunit protein uL18 (207 aa).

It belongs to the universal ribosomal protein uL18 family. As to quaternary structure, part of the 50S ribosomal subunit. Contacts the 5S and 23S rRNAs.

Its function is as follows. This is one of the proteins that bind and probably mediate the attachment of the 5S RNA into the large ribosomal subunit, where it forms part of the central protuberance. The sequence is that of Large ribosomal subunit protein uL18 from Caldivirga maquilingensis (strain ATCC 700844 / DSM 13496 / JCM 10307 / IC-167).